Here is a 356-residue protein sequence, read N- to C-terminus: Poly(rC)-binding protein 1 (356 aa).

Methionine 1 is modified (N-acetylmethionine). KH domains are found at residues 13 to 75 and 97 to 162; these read TLTI…FAMI and PVTL…VKQI. A Glycyl lysine isopeptide (Lys-Gly) (interchain with G-Cter in SUMO2) cross-link involves residue lysine 115. Serine 173, serine 189, serine 190, serine 246, serine 264, and serine 273 each carry phosphoserine. The region spanning 279–343 is the KH 3 domain; the sequence is QTTHELTIPN…ASISLAQYLI (65 aa).

In terms of processing, phosphorylated; lowers poly(rC)-binding activity.

Its subcellular location is the nucleus. It is found in the cytoplasm. In terms of biological role, single-stranded nucleic acid binding protein that binds preferentially to oligo dC. Together with PCBP2, required for erythropoiesis, possibly by regulating mRNA splicing. This chain is Poly(rC)-binding protein 1 (PCBP1), found in Bos taurus (Bovine).